The following is a 120-amino-acid chain: Non-specific lipid-transfer protein 6 (120 aa).

A signal peptide spans 1 to 26 (MARSMSLKLACVVVLCLLVDAPLAQG). Cystine bridges form between C57-C102 and C77-C116.

It belongs to the plant LTP family. As to expression, specifically expressed in fiber cells.

In terms of biological role, plant non-specific lipid-transfer proteins transfer phospholipids as well as galactolipids across membranes. May play a role in wax or cutin deposition in the cell walls of expanding epidermal cells and certain secretory tissues. The protein is Non-specific lipid-transfer protein 6 (LTP6) of Gossypium hirsutum (Upland cotton).